The chain runs to 108 residues: MLKSNLKIDNRFSVMGVVSQLPKRLKSPSGIEHCKFLLEHRSDQIESGFTRQAWLKMPVQISGNQLIEKTQSITVGSKILVVGFITSHKTQSGLCQLVLHAEQIEFID.

Residues 8-108 enclose the SSB domain; it reads IDNRFSVMGV…LHAEQIEFID (101 aa).

This sequence belongs to the PriB family. In terms of assembly, homodimer. Interacts with PriA and DnaT. Component of the replication restart primosome. Primosome assembly occurs via a 'hand-off' mechanism. PriA binds to replication forks, subsequently PriB then DnaT bind; DnaT then displaces ssDNA to generate the helicase loading substrate.

In terms of biological role, involved in the restart of stalled replication forks, which reloads the replicative helicase on sites other than the origin of replication; the PriA-PriB pathway is the major replication restart pathway. During primosome assembly it facilitates complex formation between PriA and DnaT on DNA; stabilizes PriA on DNA. Stimulates the DNA unwinding activity of PriA helicase. The chain is Replication restart protein PriB from Haemophilus influenzae (strain 86-028NP).